Consider the following 546-residue polypeptide: Chaperonin GroEL (546 aa).

Residues 30–33 (TLGP), lysine 51, 87–91 (DGTTT), glycine 415, 479–481 (NAA), and aspartate 495 each bind ATP. Positions 526-546 (KKGDSAPAGGGMGDMGGMGMM) are disordered. The span at 533–546 (AGGGMGDMGGMGMM) shows a compositional bias: gly residues.

It belongs to the chaperonin (HSP60) family. In terms of assembly, forms a cylinder of 14 subunits composed of two heptameric rings stacked back-to-back. Interacts with the co-chaperonin GroES.

The protein localises to the cytoplasm. The enzyme catalyses ATP + H2O + a folded polypeptide = ADP + phosphate + an unfolded polypeptide.. Its function is as follows. Together with its co-chaperonin GroES, plays an essential role in assisting protein folding. The GroEL-GroES system forms a nano-cage that allows encapsulation of the non-native substrate proteins and provides a physical environment optimized to promote and accelerate protein folding. In Thioalkalivibrio sulfidiphilus (strain HL-EbGR7), this protein is Chaperonin GroEL.